We begin with the raw amino-acid sequence, 479 residues long: Ribulose bisphosphate carboxylase large chain (479 aa).

Residues 1 to 2 (MS) constitute a propeptide that is removed on maturation. Positions 123 and 173 each coordinate substrate. Lys-175 (proton acceptor) is an active-site residue. Lys-177 serves as a coordination point for substrate. Positions 201, 203, and 204 each coordinate Mg(2+). Position 201 is an N6-carboxylysine (Lys-201). Ser-208 is modified (phosphoserine). The active-site Proton acceptor is His-294. Arg-295 and His-327 together coordinate substrate. Thr-330 bears the Phosphothreonine mark. Ser-379 contacts substrate.

Belongs to the RuBisCO large chain family. Type I subfamily. In terms of assembly, heterohexadecamer of 8 large chains and 8 small chains; disulfide-linked. The disulfide link is formed within the large subunit homodimers. The cofactor is Mg(2+). In terms of processing, the disulfide bond which can form in the large chain dimeric partners within the hexadecamer appears to be associated with oxidative stress and protein turnover.

It localises to the plastid. It is found in the chloroplast. The enzyme catalyses 2 (2R)-3-phosphoglycerate + 2 H(+) = D-ribulose 1,5-bisphosphate + CO2 + H2O. It carries out the reaction D-ribulose 1,5-bisphosphate + O2 = 2-phosphoglycolate + (2R)-3-phosphoglycerate + 2 H(+). Functionally, ruBisCO catalyzes two reactions: the carboxylation of D-ribulose 1,5-bisphosphate, the primary event in carbon dioxide fixation, as well as the oxidative fragmentation of the pentose substrate in the photorespiration process. Both reactions occur simultaneously and in competition at the same active site. This is Ribulose bisphosphate carboxylase large chain from Arabis hirsuta (Hairy rock-cress).